We begin with the raw amino-acid sequence, 395 residues long: ATP phosphoribosyltransferase regulatory subunit (395 aa).

This sequence belongs to the class-II aminoacyl-tRNA synthetase family. HisZ subfamily. As to quaternary structure, heteromultimer composed of HisG and HisZ subunits.

The protein resides in the cytoplasm. It functions in the pathway amino-acid biosynthesis; L-histidine biosynthesis; L-histidine from 5-phospho-alpha-D-ribose 1-diphosphate: step 1/9. Functionally, required for the first step of histidine biosynthesis. May allow the feedback regulation of ATP phosphoribosyltransferase activity by histidine. The protein is ATP phosphoribosyltransferase regulatory subunit of Pseudomonas entomophila (strain L48).